Reading from the N-terminus, the 473-residue chain is MASCVGSRTLSKDDVNYRMHFRMINEQQVEDITIDFFYRPHTITLLSFTIISLMYFAFTRDDSVPEDNIWRGILSVIFFFLIISVLAFPNGPFTRPHPALWRMVFGLSVLYFLFLVFLLFLNFEQVKSLMYWLDPNLRYATREADIMEYAVNCHVITWERIVSHFDIFAFGHFWGWAMKALLIRSYGLCWTISITWELTELFFMHLLPNFAECWWDQVILDILLCNGGGIWLGMVVCRFLEMRTYHWASFKDIHTTTGKIKRAVLQFTPASWTYVRWFDPKSSFQRVAGIYLFMIIWQLTELNTFFLKHIFVFQASHPLSWGRILFIGCITAPTVRQYYAYLTDTQCKRVGTQCWVFGVIGFLEAIVCIKFGQDLFSKTQILYVMLWLLCVAFTTFLCLYGMVWYAEHYGHREKTYSECEDGTYSPEISWHHGKGSKGSEDSPPKHSSNHESHSSRRRNRHSKSKVTNGVGKK.

Ala-2 is modified (N-acetylalanine). The Cytoplasmic segment spans residues 2 to 35; that stretch reads ASCVGSRTLSKDDVNYRMHFRMINEQQVEDITID. The chain crosses the membrane as a helical span at residues 36-56; the sequence is FFYRPHTITLLSFTIISLMYF. Residues 57-72 lie on the Lumenal side of the membrane; it reads AFTRDDSVPEDNIWRG. A helical transmembrane segment spans residues 73-93; it reads ILSVIFFFLIISVLAFPNGPF. The Cytoplasmic segment spans residues 94–102; the sequence is TRPHPALWR. The helical transmembrane segment at 103 to 123 threads the bilayer; sequence MVFGLSVLYFLFLVFLLFLNF. Residues 124–186 are Lumenal-facing; the sequence is EQVKSLMYWL…AMKALLIRSY (63 aa). A helical membrane pass occupies residues 187 to 207; sequence GLCWTISITWELTELFFMHLL. Topologically, residues 208 to 216 are cytoplasmic; it reads PNFAECWWD. Residues 217 to 237 form a helical membrane-spanning segment; sequence QVILDILLCNGGGIWLGMVVC. The Lumenal segment spans residues 238-286; the sequence is RFLEMRTYHWASFKDIHTTTGKIKRAVLQFTPASWTYVRWFDPKSSFQR. A helical membrane pass occupies residues 287–307; sequence VAGIYLFMIIWQLTELNTFFL. The Cytoplasmic portion of the chain corresponds to 308 to 319; that stretch reads KHIFVFQASHPL. Residues 320-342 traverse the membrane as a helical segment; it reads SWGRILFIGCITAPTVRQYYAYL. The Lumenal portion of the chain corresponds to 343–355; sequence TDTQCKRVGTQCW. Residues 356–376 form a helical membrane-spanning segment; sequence VFGVIGFLEAIVCIKFGQDLF. At 377 to 383 the chain is on the cytoplasmic side; the sequence is SKTQILY. A helical transmembrane segment spans residues 384-404; sequence VMLWLLCVAFTTFLCLYGMVW. Over 405–473 the chain is Lumenal; it reads YAEHYGHREK…SKVTNGVGKK (69 aa). Phosphoserine is present on residues Ser-417, Ser-425, Ser-442, and Ser-454. The segment at 428–473 is disordered; sequence ISWHHGKGSKGSEDSPPKHSSNHESHSSRRRNRHSKSKVTNGVGKK. Residues 437–454 are compositionally biased toward basic and acidic residues; the sequence is KGSEDSPPKHSSNHESHS. The segment covering 455 to 464 has biased composition (basic residues); the sequence is SRRRNRHSKS.

It belongs to the phosphatidyl serine synthase family. Expressed in kidney, testis, lung, skeletal muscle, liver brain, heart and spleen with highest expression in testis, liver, heart and brain.

The protein localises to the endoplasmic reticulum membrane. The catalysed reaction is a 1,2-diacyl-sn-glycero-3-phosphoethanolamine + L-serine = a 1,2-diacyl-sn-glycero-3-phospho-L-serine + ethanolamine. It carries out the reaction a 1,2-diacyl-sn-glycero-3-phosphocholine + L-serine = a 1,2-diacyl-sn-glycero-3-phospho-L-serine + choline. It participates in phospholipid metabolism; phosphatidylserine biosynthesis. Its activity is regulated as follows. Potently inhibited by choline in the mitochondria-associated membrane (MAM). Very little inhibition by choline in the endoplasmic reticulum (ER) per se. Its function is as follows. Catalyzes a base-exchange reaction in which the polar head group of phosphatidylethanolamine (PE) or phosphatidylcholine (PC) is replaced by L-serine. Catalyzes mainly the conversion of phosphatidylcholine. Also converts, in vitro and to a lesser extent, phosphatidylethanolamine. The polypeptide is Phosphatidylserine synthase 1 (Ptdss1) (Mus musculus (Mouse)).